We begin with the raw amino-acid sequence, 344 residues long: uncharacterized protein (344 aa).

A signal peptide spans 1-28 (MNKKSLNIVATLGILLVLAFSGCVDQSA).

The protein belongs to the bacterial solute-binding protein 1 family. WtpA subfamily.

This is an uncharacterized protein from Methanococcus maripaludis (strain C7 / ATCC BAA-1331).